A 118-amino-acid polypeptide reads, in one-letter code: Small ribosomal subunit protein uS13 (118 aa).

Residues 93 to 118 (KKLPVRGQRTKTNARTRKGPRKLMKK) are disordered.

Belongs to the universal ribosomal protein uS13 family. Part of the 30S ribosomal subunit. Forms a loose heterodimer with protein S19. Forms two bridges to the 50S subunit in the 70S ribosome.

Functionally, located at the top of the head of the 30S subunit, it contacts several helices of the 16S rRNA. In the 70S ribosome it contacts the 23S rRNA (bridge B1a) and protein L5 of the 50S subunit (bridge B1b), connecting the 2 subunits; these bridges are implicated in subunit movement. Contacts the tRNAs in the A and P-sites. The sequence is that of Small ribosomal subunit protein uS13 from Buchnera aphidicola subsp. Baizongia pistaciae (strain Bp).